The chain runs to 233 residues: LexA repressor (233 aa).

The segment at residues 26-46 (FDEMKEALDLRSKSGIHRLIT) is a DNA-binding region (H-T-H motif). Active-site for autocatalytic cleavage activity residues include Ser-154 and Lys-192.

The protein belongs to the peptidase S24 family. In terms of assembly, homodimer.

The catalysed reaction is Hydrolysis of Ala-|-Gly bond in repressor LexA.. Functionally, represses a number of genes involved in the response to DNA damage (SOS response), including recA and lexA. In the presence of single-stranded DNA, RecA interacts with LexA causing an autocatalytic cleavage which disrupts the DNA-binding part of LexA, leading to derepression of the SOS regulon and eventually DNA repair. In Roseobacter denitrificans (strain ATCC 33942 / OCh 114) (Erythrobacter sp. (strain OCh 114)), this protein is LexA repressor.